The following is a 437-amino-acid chain: GTPase Era, mitochondrial (437 aa).

A mitochondrion-targeting transit peptide spans 1-20 (MAAPRRYFPGIVRALLGAWQ). Positions 112–330 (RVLRVVLLGA…QYLLTQAQPG (219 aa)) constitute an Era-type G domain. Positions 120–127 (GAPNAGKS) are G1. 120–127 (GAPNAGKS) contributes to the GTP binding site. Positions 146 to 150 (HTTRC) are G2. Positions 167-170 (DTPG) are G3. 167–171 (DTPGI) contacts GTP. At serine 173 the chain carries Phosphoserine. GTP is bound at residue 236-239 (NKVD). Residues 236 to 239 (NKVD) are G4. A disordered region spans residues 272–293 (SRPSTHCPGPETEDPNTHAVRS). Residues 308–310 (LSA) form a G5 region. The region spanning 360–437 (LPEEVPYSVQ…LLRLSVKLLK (78 aa)) is the KH type-2 domain.

The protein belongs to the TRAFAC class TrmE-Era-EngA-EngB-Septin-like GTPase superfamily. Era GTPase family.

The protein resides in the mitochondrion matrix. Its subcellular location is the mitochondrion inner membrane. Its function is as follows. Probable GTPase that plays a role in the mitochondrial ribosomal small subunit assembly. Specifically binds the 12S mitochondrial rRNA (12S mt-rRNA) to a 33 nucleotide section delineating the 3' terminal stem-loop region. May act as a chaperone that protects the 12S mt-rRNA on the 28S mitoribosomal subunit during ribosomal small subunit assembly. This chain is GTPase Era, mitochondrial (Eral1), found in Rattus norvegicus (Rat).